The chain runs to 433 residues: PHO85 cyclin-10 (433 aa).

The span at 1-10 shows a compositional bias: basic and acidic residues; sequence MDMTKNHTTD. Disordered regions lie at residues 1–20 and 51–81; these read MDMT…GDIR and LTSE…TTDS. Polar residues predominate over residues 51–63; that stretch reads LTSEWDQSRSNTP.

It belongs to the cyclin family. PHO80 subfamily. As to quaternary structure, forms a cyclin-CDK complex with PHO85. Interacts with GSY2, independent of the presence of PHO85.

Its subcellular location is the cytoplasm. In terms of biological role, cyclin partner of the cyclin-dependent kinase (CDK) PHO85. Together with cyclin PCL8, negatively controls glycogen accumulation under favorable growth conditions. The PCL10-PHO85 cyclin-CDK holoenzyme has glycogen synthase kinase activity and phosphorylates and negatively regulates glycogen synthase GSY2. Also has minor GLC8 kinase activity. The sequence is that of PHO85 cyclin-10 (PCL10) from Saccharomyces cerevisiae (strain ATCC 204508 / S288c) (Baker's yeast).